A 655-amino-acid polypeptide reads, in one-letter code: Archaeal Lon protease (655 aa).

Residues 1–123 are Cytoplasmic-facing; that stretch reads MEENIESVEE…KAEREKRDRS (123 aa). Residue 57-64 coordinates ATP; it reads GEPGTGKS. Residues 124 to 144 traverse the membrane as a helical segment; it reads RSIMFVIFSVVLLGIIAAIVL. Residue Arg-145 is a topological domain, extracellular. Residues 146-166 traverse the membrane as a helical segment; it reads SITLIFFAIMAAAFLYMAMAF. Residues 167–655 are Cytoplasmic-facing; the sequence is NPVIRNEKAM…ASTRAGQNVA (489 aa). The 186-residue stretch at 433 to 618 folds into the Lon proteolytic domain; it reads GSVVGMVNGL…EDVLKVALVN (186 aa). Catalysis depends on residues Ser-525 and Lys-568.

Belongs to the peptidase S16 family. Archaeal LonB subfamily. Homohexamer. Organized in a ring with a central cavity.

It is found in the cell membrane. Functionally, ATP-dependent serine protease that mediates the selective degradation of mutant and abnormal proteins as well as certain short-lived regulatory proteins. Degrades polypeptides processively. The sequence is that of Archaeal Lon protease from Thermoplasma volcanium (strain ATCC 51530 / DSM 4299 / JCM 9571 / NBRC 15438 / GSS1).